Here is a 243-residue protein sequence, read N- to C-terminus: Beta-glucanase (243 aa).

Positions 1 to 27 are cleaved as a signal peptide; it reads MSYRVKRMLMLLVTGLFLSLSTFAASA. Residues 29–243 enclose the GH16 domain; sequence AQTGGSFYEP…SLHWVRYTKR (215 aa). Cysteine 61 and cysteine 90 are oxidised to a cystine. Glutamate 134 functions as the Nucleophile in the catalytic mechanism. Catalysis depends on glutamate 138, which acts as the Proton donor.

It belongs to the glycosyl hydrolase 16 family.

It catalyses the reaction Hydrolysis of (1-&gt;4)-beta-D-glucosidic linkages in beta-D-glucans containing (1-&gt;3)- and (1-&gt;4)-bonds.. This Bacillus licheniformis protein is Beta-glucanase (bg1).